The primary structure comprises 279 residues: Elongation factor Ts (279 aa).

The involved in Mg(2+) ion dislocation from EF-Tu stretch occupies residues 80 to 83 (TDFV).

Belongs to the EF-Ts family.

The protein resides in the cytoplasm. In terms of biological role, associates with the EF-Tu.GDP complex and induces the exchange of GDP to GTP. It remains bound to the aminoacyl-tRNA.EF-Tu.GTP complex up to the GTP hydrolysis stage on the ribosome. The polypeptide is Elongation factor Ts (tsf) (Borreliella burgdorferi (strain ATCC 35210 / DSM 4680 / CIP 102532 / B31) (Borrelia burgdorferi)).